Here is a 129-residue protein sequence, read N- to C-terminus: MYEKIVIVLLLSGYISTQDVTEIIPHEISSKLPTQAGFISTEDPSFNTPSTRQDPSGTMYQHLPDGGQKARQQLVHIFSEPVIIGIIYAVMLGIIITILSIAFCIGQLTKKSSLPAQVASPEDVDPEVL.

A signal peptide spans 1 to 17 (MYEKIVIVLLLSGYIST). Residue Q18 is modified to Pyrrolidone carboxylic acid. Over 18–82 (QDVTEIIPHE…QLVHIFSEPV (65 aa)) the chain is Extracellular. S29 and S30 each carry an O-linked (GalNAc...) serine glycan. T34 carries O-linked (GalNAc...) threonine glycosylation. S40 carries an O-linked (GalNAc...) serine glycan. 2 O-linked (GalNAc...) threonine glycosylation sites follow: T41 and T48. S56 is a glycosylation site (O-linked (GalNAc...) serine). A helical transmembrane segment spans residues 83–103 (IIGIIYAVMLGIIITILSIAF). Residues 104 to 129 (CIGQLTKKSSLPAQVASPEDVDPEVL) lie on the Cytoplasmic side of the membrane.

Belongs to the glycophorin-A family. Homodimer. Component of the ankyrin-1 complex in the erythrocyte, composed of ANK1, RHCE, RHAG, SLC4A1, EPB42, GYPA, GYPB and AQP1. Interacts with SLC4A1; a GYPA monomer is bound at each end of the SLC4A1 dimer forming a heterotetramer.

Its subcellular location is the membrane. Component of the ankyrin-1 complex, a multiprotein complex involved in the stability and shape of the erythrocyte membrane. Glycophorin A is the major intrinsic membrane protein of the erythrocyte. The N-terminal glycosylated segment, which lies outside the erythrocyte membrane, has MN blood group receptors. Appears to be important for the function of SLC4A1 and is required for high activity of SLC4A1. May be involved in translocation of SLC4A1 to the plasma membrane. This is Glycophorin-A from Canis lupus familiaris (Dog).